The primary structure comprises 260 residues: Flagellar basal-body rod protein FlgG (260 aa).

Belongs to the flagella basal body rod proteins family. The basal body constitutes a major portion of the flagellar organelle and consists of four rings (L,P,S, and M) mounted on a central rod. The rod consists of about 26 subunits of FlgG in the distal portion, and FlgB, FlgC and FlgF are thought to build up the proximal portion of the rod with about 6 subunits each.

It localises to the bacterial flagellum basal body. This Escherichia coli O157:H7 protein is Flagellar basal-body rod protein FlgG (flgG).